The sequence spans 49 residues: uncharacterized protein (49 aa).

Residues 5–25 (LTTIFSVVIVLAIFLYFGLLI) form a helical membrane-spanning segment.

It belongs to the plectrovirus ORF12 protein family.

It is found in the host membrane. This is an uncharacterized protein from Spiroplasma virus SpV1-R8A2 B (SpV1).